Reading from the N-terminus, the 380-residue chain is 3-dehydroquinate synthase (380 aa).

NAD(+)-binding positions include 68–73, 102–106, 126–127, Lys139, and Lys148; these read PGEPNK, GTVLD, and TT. 3 residues coordinate Zn(2+): Glu181, His243, and His259.

Belongs to the sugar phosphate cyclases superfamily. Dehydroquinate synthase family. NAD(+) is required as a cofactor. Requires Co(2+) as cofactor. The cofactor is Zn(2+).

It is found in the cytoplasm. The enzyme catalyses 7-phospho-2-dehydro-3-deoxy-D-arabino-heptonate = 3-dehydroquinate + phosphate. Its pathway is metabolic intermediate biosynthesis; chorismate biosynthesis; chorismate from D-erythrose 4-phosphate and phosphoenolpyruvate: step 2/7. Its function is as follows. Catalyzes the conversion of 3-deoxy-D-arabino-heptulosonate 7-phosphate (DAHP) to dehydroquinate (DHQ). The polypeptide is 3-dehydroquinate synthase (aroB) (Chlamydia pneumoniae (Chlamydophila pneumoniae)).